Consider the following 368-residue polypeptide: UDP-N-acetylglucosamine--N-acetylmuramyl-(pentapeptide) pyrophosphoryl-undecaprenol N-acetylglucosamine transferase (368 aa).

UDP-N-acetyl-alpha-D-glucosamine contacts are provided by residues Thr-14–Gly-16, Asn-125, Arg-168, Ser-196, and Gln-297.

The protein belongs to the glycosyltransferase 28 family. MurG subfamily.

Its subcellular location is the cell inner membrane. The enzyme catalyses di-trans,octa-cis-undecaprenyl diphospho-N-acetyl-alpha-D-muramoyl-L-alanyl-D-glutamyl-meso-2,6-diaminopimeloyl-D-alanyl-D-alanine + UDP-N-acetyl-alpha-D-glucosamine = di-trans,octa-cis-undecaprenyl diphospho-[N-acetyl-alpha-D-glucosaminyl-(1-&gt;4)]-N-acetyl-alpha-D-muramoyl-L-alanyl-D-glutamyl-meso-2,6-diaminopimeloyl-D-alanyl-D-alanine + UDP + H(+). Its pathway is cell wall biogenesis; peptidoglycan biosynthesis. In terms of biological role, cell wall formation. Catalyzes the transfer of a GlcNAc subunit on undecaprenyl-pyrophosphoryl-MurNAc-pentapeptide (lipid intermediate I) to form undecaprenyl-pyrophosphoryl-MurNAc-(pentapeptide)GlcNAc (lipid intermediate II). This is UDP-N-acetylglucosamine--N-acetylmuramyl-(pentapeptide) pyrophosphoryl-undecaprenol N-acetylglucosamine transferase from Nitrobacter winogradskyi (strain ATCC 25391 / DSM 10237 / CIP 104748 / NCIMB 11846 / Nb-255).